The primary structure comprises 607 residues: Elongation factor 4 (607 aa).

The tr-type G domain occupies 11-193 (ENIRNFSIIA…KIVEVVPAPD (183 aa)). Residues 23 to 28 (DHGKST) and 140 to 143 (NKID) contribute to the GTP site.

Belongs to the TRAFAC class translation factor GTPase superfamily. Classic translation factor GTPase family. LepA subfamily.

It is found in the cell membrane. It carries out the reaction GTP + H2O = GDP + phosphate + H(+). Required for accurate and efficient protein synthesis under certain stress conditions. May act as a fidelity factor of the translation reaction, by catalyzing a one-codon backward translocation of tRNAs on improperly translocated ribosomes. Back-translocation proceeds from a post-translocation (POST) complex to a pre-translocation (PRE) complex, thus giving elongation factor G a second chance to translocate the tRNAs correctly. Binds to ribosomes in a GTP-dependent manner. The polypeptide is Elongation factor 4 (Staphylococcus aureus (strain MW2)).